Reading from the N-terminus, the 173-residue chain is RNA polymerase sigma factor YlaC (173 aa).

This sequence belongs to the sigma-70 factor family. ECF subfamily.

Sigma factors are initiation factors that promote the attachment of RNA polymerase to specific initiation sites and are then released. This sigma factor contributes to oxidative stress resistance. This chain is RNA polymerase sigma factor YlaC (ylaC), found in Bacillus subtilis (strain 168).